Consider the following 182-residue polypeptide: ATP synthase subunit delta (182 aa).

The protein belongs to the ATPase delta chain family. In terms of assembly, F-type ATPases have 2 components, F(1) - the catalytic core - and F(0) - the membrane proton channel. F(1) has five subunits: alpha(3), beta(3), gamma(1), delta(1), epsilon(1). F(0) has three main subunits: a(1), b(2) and c(10-14). The alpha and beta chains form an alternating ring which encloses part of the gamma chain. F(1) is attached to F(0) by a central stalk formed by the gamma and epsilon chains, while a peripheral stalk is formed by the delta and b chains.

It is found in the cell membrane. Functionally, f(1)F(0) ATP synthase produces ATP from ADP in the presence of a proton or sodium gradient. F-type ATPases consist of two structural domains, F(1) containing the extramembraneous catalytic core and F(0) containing the membrane proton channel, linked together by a central stalk and a peripheral stalk. During catalysis, ATP synthesis in the catalytic domain of F(1) is coupled via a rotary mechanism of the central stalk subunits to proton translocation. Its function is as follows. This protein is part of the stalk that links CF(0) to CF(1). It either transmits conformational changes from CF(0) to CF(1) or is implicated in proton conduction. The polypeptide is ATP synthase subunit delta (Desulforudis audaxviator (strain MP104C)).